A 200-amino-acid polypeptide reads, in one-letter code: ATP-dependent Clp protease proteolytic subunit 1 (200 aa).

Ser-102 (nucleophile) is an active-site residue. His-127 is an active-site residue.

This sequence belongs to the peptidase S14 family. In terms of assembly, fourteen ClpP subunits assemble into 2 heptameric rings which stack back to back to give a disk-like structure with a central cavity, resembling the structure of eukaryotic proteasomes.

It is found in the cytoplasm. It catalyses the reaction Hydrolysis of proteins to small peptides in the presence of ATP and magnesium. alpha-casein is the usual test substrate. In the absence of ATP, only oligopeptides shorter than five residues are hydrolyzed (such as succinyl-Leu-Tyr-|-NHMec, and Leu-Tyr-Leu-|-Tyr-Trp, in which cleavage of the -Tyr-|-Leu- and -Tyr-|-Trp bonds also occurs).. Its function is as follows. Cleaves peptides in various proteins in a process that requires ATP hydrolysis. Has a chymotrypsin-like activity. Plays a major role in the degradation of misfolded proteins. This Bradyrhizobium diazoefficiens (strain JCM 10833 / BCRC 13528 / IAM 13628 / NBRC 14792 / USDA 110) protein is ATP-dependent Clp protease proteolytic subunit 1.